Here is a 571-residue protein sequence, read N- to C-terminus: E3 ubiquitin-protein ligase CHFR (571 aa).

Positions 1 to 21 (MERPEEGKQSPPPQPWGRLLR) are disordered. An FHA domain is found at 38–89 (WTIGRRRGCDLSFPSNKLVSGDHCRIAVDEKSGQVTLEDTSTSGTVINKLKV). The disordered stretch occupies residues 113–138 (EHRSGGGGISPKGSGPSVASDEVSSF). Residue S152 is modified to Phosphoserine. The segment at 212–251 (CIICQDLLHDCVSLQPCMHTFCAACYSGWMERSSLCPTCR) adopts an RING-type zinc-finger fold. At T294 the chain carries Phosphothreonine. The disordered stretch occupies residues 297-325 (MLQPKVRRSFSDEEGSSEDLLELSDVDSE). Over residues 308–325 (DEEGSSEDLLELSDVDSE) the composition is skewed to acidic residues. A PBZ-type zinc finger spans residues 540–562 (PDCYWGRNCRTQVKAHHAMKFNH).

Belongs to the CHFR family. In terms of assembly, interacts with HDAC1 and HDAC2. Interacts with PML (with sumoylated form of PML). Poly-ADP-ribosylated. In addition to binding non covalently poly(ADP-ribose) via its PBZ-type zinc finger, the protein is also covalently poly-ADP-ribosylated by PARP1. Post-translationally, autoubiquitinated; may regulate its cellular level. In terms of processing, phosphorylated by PKB. Phosphorylation may affect its E3 ligase activity.

The protein resides in the nucleus. It localises to the PML body. The catalysed reaction is S-ubiquitinyl-[E2 ubiquitin-conjugating enzyme]-L-cysteine + [acceptor protein]-L-lysine = [E2 ubiquitin-conjugating enzyme]-L-cysteine + N(6)-ubiquitinyl-[acceptor protein]-L-lysine.. It participates in protein modification; protein ubiquitination. Functionally, E3 ubiquitin-protein ligase that functions in the antephase checkpoint by actively delaying passage into mitosis in response to microtubule poisons. Acts in early prophase before chromosome condensation, when the centrosome move apart from each other along the periphery of the nucleus. Probably involved in signaling the presence of mitotic stress caused by microtubule poisons by mediating the 'Lys-48'-linked ubiquitination of target proteins, leading to their degradation by the proteasome. Promotes the ubiquitination and subsequent degradation of AURKA and PLK1. Probably acts as a tumor suppressor, possibly by mediating the polyubiquitination of HDAC1, leading to its degradation. May also promote the formation of 'Lys-63'-linked polyubiquitin chains and functions with the specific ubiquitin-conjugating UBC13-MMS2 (UBE2N-UBE2V2) heterodimer. Substrates that are polyubiquitinated at 'Lys-63' are usually not targeted for degradation, but are rather involved in signaling cellular stress. The sequence is that of E3 ubiquitin-protein ligase CHFR (CHFR) from Pongo abelii (Sumatran orangutan).